The following is a 154-amino-acid chain: 6,7-dimethyl-8-ribityllumazine synthase (154 aa).

Residues Phe22, 56–58 (SFE), and 81–83 (VLI) contribute to the 5-amino-6-(D-ribitylamino)uracil site. (2S)-2-hydroxy-3-oxobutyl phosphate is bound at residue 86–87 (ET). His89 acts as the Proton donor in catalysis. Position 114 (Phe114) interacts with 5-amino-6-(D-ribitylamino)uracil. Arg128 serves as a coordination point for (2S)-2-hydroxy-3-oxobutyl phosphate.

This sequence belongs to the DMRL synthase family.

It catalyses the reaction (2S)-2-hydroxy-3-oxobutyl phosphate + 5-amino-6-(D-ribitylamino)uracil = 6,7-dimethyl-8-(1-D-ribityl)lumazine + phosphate + 2 H2O + H(+). It participates in cofactor biosynthesis; riboflavin biosynthesis; riboflavin from 2-hydroxy-3-oxobutyl phosphate and 5-amino-6-(D-ribitylamino)uracil: step 1/2. In terms of biological role, catalyzes the formation of 6,7-dimethyl-8-ribityllumazine by condensation of 5-amino-6-(D-ribitylamino)uracil with 3,4-dihydroxy-2-butanone 4-phosphate. This is the penultimate step in the biosynthesis of riboflavin. This chain is 6,7-dimethyl-8-ribityllumazine synthase, found in Chlamydia felis (strain Fe/C-56) (Chlamydophila felis).